Here is a 364-residue protein sequence, read N- to C-terminus: Anthranilate phosphoribosyltransferase (364 aa).

Positions 1-10 are enriched in polar residues; that stretch reads MTSGPSQPFP. The interval 1-22 is disordered; that stretch reads MTSGPSQPFPSASGPDDGPSWP. 5-phospho-alpha-D-ribose 1-diphosphate contacts are provided by residues G101, 104–105, T109, 111–114, 129–137, and G141; these read GD, NLST, and KHGNRAASS. G101 is a binding site for anthranilate. Residue S113 participates in Mg(2+) binding. Residue N132 participates in anthranilate binding. Position 187 (R187) interacts with anthranilate. Residues D245 and E246 each coordinate Mg(2+).

The protein belongs to the anthranilate phosphoribosyltransferase family. In terms of assembly, homodimer. Requires Mg(2+) as cofactor.

The enzyme catalyses N-(5-phospho-beta-D-ribosyl)anthranilate + diphosphate = 5-phospho-alpha-D-ribose 1-diphosphate + anthranilate. Its pathway is amino-acid biosynthesis; L-tryptophan biosynthesis; L-tryptophan from chorismate: step 2/5. Functionally, catalyzes the transfer of the phosphoribosyl group of 5-phosphorylribose-1-pyrophosphate (PRPP) to anthranilate to yield N-(5'-phosphoribosyl)-anthranilate (PRA). The polypeptide is Anthranilate phosphoribosyltransferase (Mycolicibacterium smegmatis (strain ATCC 700084 / mc(2)155) (Mycobacterium smegmatis)).